Here is a 182-residue protein sequence, read N- to C-terminus: Cell wall protein phiA (182 aa).

The signal sequence occupies residues 1–18 (MKLTSTAALASLAVAATA). Residues asparagine 57 and asparagine 107 are each glycosylated (N-linked (GlcNAc...) asparagine).

It belongs to the phiA family. Mainly present in phialides and conidia.

It localises to the secreted. The protein resides in the cell wall. Functionally, cell wall protein involved in development of asexual structures such as phialide and conidium development, and thus required for spore formation. Plays a role as a general stress protectant produced by the fungus in competition with antagonistic bacteria. The polypeptide is Cell wall protein phiA (Emericella nidulans (strain FGSC A4 / ATCC 38163 / CBS 112.46 / NRRL 194 / M139) (Aspergillus nidulans)).